The primary structure comprises 131 residues: Sec-independent protein translocase protein TatB (131 aa).

The chain crosses the membrane as a helical span at residues 2–22; that stretch reads FDGIGFMELLLIGIVGLVVLG. The segment covering 86–95 has biased composition (polar residues); sequence LKEAAQSVNR. Residues 86–131 form a disordered region; that stretch reads LKEAAQSVNRPYQVEDVPAAKDVPAKEMPTSETSTATNANSDKPNG. The span at 115 to 131 shows a compositional bias: low complexity; that stretch reads TSETSTATNANSDKPNG.

Belongs to the TatB family. The Tat system comprises two distinct complexes: a TatABC complex, containing multiple copies of TatA, TatB and TatC subunits, and a separate TatA complex, containing only TatA subunits. Substrates initially bind to the TatABC complex, which probably triggers association of the separate TatA complex to form the active translocon.

It localises to the cell inner membrane. Part of the twin-arginine translocation (Tat) system that transports large folded proteins containing a characteristic twin-arginine motif in their signal peptide across membranes. Together with TatC, TatB is part of a receptor directly interacting with Tat signal peptides. TatB may form an oligomeric binding site that transiently accommodates folded Tat precursor proteins before their translocation. The chain is Sec-independent protein translocase protein TatB from Shewanella halifaxensis (strain HAW-EB4).